Consider the following 303-residue polypeptide: MKVLLIAGGWSSERDVSLAGARGIEKALCALGHDVTWFDPATSLDGLLEAASSHDFAFINLHGSPGEDGLVQAMLDTAGCPYQGSGPAGSFLALNKAVSKQLLRRHGILTPDWAFLAARPAADWEPGLGYPLFVKPNTGGSSLCLSRVTQPEGLAPALEAVFAHCGEAIVEPAIPGVEVTCGVLGDTALPPILIRPAEGAFFDYTSKYTPGGATELCPAPLPAEVTAHVQDVTLRAHRLLGLRGYSRADYILRDDGALFLLEVNTLPGMTPTSLVPQEAAAIGLDFPALIARLIELGMTAAGR.

An ATP-grasp domain is found at 100 to 295 (KQLLRRHGIL…FPALIARLIE (196 aa)). 127 to 180 (GLGYPLFVKPNTGGSSLCLSRVTQPEGLAPALEAVFAHCGEAIVEPAIPGVEVT) serves as a coordination point for ATP. Mg(2+)-binding residues include Asp249, Glu262, and Asn264.

Belongs to the D-alanine--D-alanine ligase family. Requires Mg(2+) as cofactor. The cofactor is Mn(2+).

The protein localises to the cytoplasm. The enzyme catalyses 2 D-alanine + ATP = D-alanyl-D-alanine + ADP + phosphate + H(+). It participates in cell wall biogenesis; peptidoglycan biosynthesis. Cell wall formation. This is D-alanine--D-alanine ligase from Nitratidesulfovibrio vulgaris (strain ATCC 29579 / DSM 644 / CCUG 34227 / NCIMB 8303 / VKM B-1760 / Hildenborough) (Desulfovibrio vulgaris).